The sequence spans 26 residues: MNQKHLLRFIKKSYQVDADRVVYSTK.

The protein belongs to the metallo-dependent hydrolases superfamily. Adenosine and AMP deaminases family. As to quaternary structure, homotetramer. Requires Zn(2+) as cofactor.

The enzyme catalyses AMP + H2O + H(+) = IMP + NH4(+). Its pathway is purine metabolism; IMP biosynthesis via salvage pathway; IMP from AMP: step 1/1. Functionally, AMP deaminase plays a critical role in energy metabolism. In Oryctolagus cuniculus (Rabbit), this protein is AMP deaminase 1 (AMPD1).